Consider the following 519-residue polypeptide: Tachykinin-like peptides receptor 99D (519 aa).

The Extracellular segment spans residues 1 to 100; that stretch reads MENRSDFEAD…SFAFVVPWWR (100 aa). Residues N3, N19, N22, and N61 are each glycosylated (N-linked (GlcNAc...) asparagine). Residues 101-123 traverse the membrane as a helical segment; the sequence is QVLWSILFGGMVIVATGGNLIVV. Residues 124-134 lie on the Cytoplasmic side of the membrane; sequence WIVMTTKRMRT. The chain crosses the membrane as a helical span at residues 135 to 155; sequence VTNYFIVNLSIADAMVSSLNV. The Extracellular portion of the chain corresponds to 156 to 175; sequence TFNYYYMLDSDWPFGEFYCK. C174 and C254 are oxidised to a cystine. A helical membrane pass occupies residues 176–197; the sequence is LSQFIAMLSICASVFTLMAISI. At 198–217 the chain is on the cytoplasmic side; sequence DRYVAIIRPLQPRMSKRCNL. The chain crosses the membrane as a helical span at residues 218–238; it reads AIAAVIWLASTLISCPMMIIY. Topologically, residues 239–270 are extracellular; sequence RTEEVPVRGLSNRTVCYPEWPDGPTNHSTMES. Residues 271–292 traverse the membrane as a helical segment; the sequence is LYNILIIILTYFLPIVSMTVTY. At 293–324 the chain is on the cytoplasmic side; the sequence is SRVGIELWGSKTIGECTPRQVENVRSKRRVVK. A helical transmembrane segment spans residues 325–346; the sequence is MMIVVVLIFAICWLPFHSYFII. Topologically, residues 347–361 are extracellular; the sequence is TSCYPAITEAPFIQE. A helical membrane pass occupies residues 362 to 384; it reads LYLAIYWLAMSNSMYNPIIYCWM. Residues 385–519 are Cytoplasmic-facing; it reads NSRFRYGFKM…STANTTQLLS (135 aa). A lipid anchor (S-palmitoyl cysteine) is attached at C399. The segment at 444 to 519 is disordered; the sequence is PSSPKSHRIS…STANTTQLLS (76 aa). Composition is skewed to polar residues over residues 454–465 and 487–499; these read HSGTGRSATLRN and SYQQEMQQRWSGP. Over residues 500–519 the composition is skewed to low complexity; sequence NSATAVTNSSSTANTTQLLS.

Belongs to the G-protein coupled receptor 1 family. During late embryogenesis (stages 11-15), expressed in the brain and in a specific subset of neurons in each neuromere of the developing ventral ganglion. Expressed in the cortex of the adult brain, which contains the neuronal cell bodies.

The protein localises to the cell membrane. Receptor for tachykinin-like peptides. This is Tachykinin-like peptides receptor 99D (TkR99D) from Drosophila melanogaster (Fruit fly).